Here is a 1394-residue protein sequence, read N- to C-terminus: ABC transporter patM (1394 aa).

Positions 1-41 (MVDNYHSSLDVAKTPIQSDADAQKSEAETEGPSSKSSQIAA) are disordered. The 244-residue stretch at 98–341 (SPLQNRQRKQ…FEDLGFECLS (244 aa)) folds into the ABC transporter 1 domain. 6 helical membrane passes run 437–457 (SLWA…GTLF), 467–487 (LFIF…QSMA), 511–531 (IAYA…AICY), 546–566 (GNFF…SMFF), 579–599 (AVLP…LYVP), and 688–708 (VGIN…GMEM). Positions 727–755 (VTHRRDKIDSETGQDQGNESSEMSAGQSN) are disordered. Positions 737–755 (ETGQDQGNESSEMSAGQSN) are enriched in polar residues. The region spanning 767 to 1013 (DKSHNLAWTN…EAIQYFQPRS (247 aa)) is the ABC transporter 2 domain. 808 to 815 (GVSGAGKT) contacts ATP. Transmembrane regions (helical) follow at residues 1131–1151 (GAYN…PLGL), 1177–1197 (LAFV…SSLV), 1219–1239 (FLMY…CASL), 1245–1265 (AAFA…GTLS), 1280–1300 (ISPL…DLPI), and 1368–1388 (IGVF…MTYL).

The protein belongs to the ABC transporter superfamily. ABCG family. PDR (TC 3.A.1.205) subfamily.

It is found in the vacuole membrane. Its subcellular location is the cell membrane. It functions in the pathway mycotoxin biosynthesis; patulin biosynthesis. ABC transporter; part of the gene cluster that mediates the biosynthesis of patulin, an acetate-derived tetraketide mycotoxin produced by several fungal species that shows antimicrobial properties against several bacteria. May be involved in the secretion of E-ascladiol to be converted to patulin by the secreted patulin synthase patE. In Penicillium expansum (Blue mold rot fungus), this protein is ABC transporter patM.